A 205-amino-acid chain; its full sequence is HTH-type transcriptional regulator PksA (205 aa).

The HTH tetR-type domain occupies Glu8–Val68. The segment at residues Ser31–Phe50 is a DNA-binding region (H-T-H motif).

Functionally, transcriptional regulation of the polyketide synthase operon. In Bacillus subtilis (strain 168), this protein is HTH-type transcriptional regulator PksA (pksA).